Here is a 152-residue protein sequence, read N- to C-terminus: Nucleoside diphosphate kinase (152 aa).

ATP-binding residues include K11, F59, R87, T93, R104, and N114. H117 acts as the Pros-phosphohistidine intermediate in catalysis.

Belongs to the NDK family. In terms of assembly, homotetramer. It depends on Mg(2+) as a cofactor.

The protein resides in the cytoplasm. It catalyses the reaction a 2'-deoxyribonucleoside 5'-diphosphate + ATP = a 2'-deoxyribonucleoside 5'-triphosphate + ADP. The enzyme catalyses a ribonucleoside 5'-diphosphate + ATP = a ribonucleoside 5'-triphosphate + ADP. Major role in the synthesis of nucleoside triphosphates other than ATP. The ATP gamma phosphate is transferred to the NDP beta phosphate via a ping-pong mechanism, using a phosphorylated active-site intermediate. The sequence is that of Nucleoside diphosphate kinase from Prochlorococcus marinus (strain MIT 9303).